The following is a 273-amino-acid chain: R-spondin-3 (273 aa).

The signal sequence occupies residues 1–21 (MHLRLISWFFIILNFMEYIGS). FU repeat units follow at residues 35-86 (PNVS…GYYG) and 92-135 (INKC…GLEA). An N-linked (GlcNAc...) asparagine glycan is attached at asparagine 36. 11 disulfide bridges follow: cysteine 41–cysteine 48, cysteine 45–cysteine 54, cysteine 57–cysteine 76, cysteine 80–cysteine 95, cysteine 98–cysteine 105, cysteine 102–cysteine 111, cysteine 114–cysteine 125, cysteine 129–cysteine 142, cysteine 148–cysteine 190, cysteine 159–cysteine 166, and cysteine 199–cysteine 206. The 61-residue stretch at 147–207 (HCEASEWSPW…KCTVQRKKCP (61 aa)) folds into the TSP type-1 domain. The segment at 201 to 273 (VQRKKCPKGE…QKSVSVSTVH (73 aa)) is disordered. The segment covering 213–223 (RKGRERKRKKP) has biased composition (basic residues). The span at 224–252 (NKEESKDAIPDNKGLEPSRETPEQRENKQ) shows a compositional bias: basic and acidic residues.

It belongs to the R-spondin family. As to quaternary structure, interacts with the extracellular domain of FZD8 and LRP6. It however does not form a ternary complex with FZD8 and LRP6. Interacts with WNT1. Binds heparin. Interacts with LGR4, LGR5 and LGR6.

Its subcellular location is the secreted. Activator of the canonical Wnt signaling pathway by acting as a ligand for LGR4-6 receptors, which acts as a key regulator of angiogenesis. Upon binding to LGR4-6 (LGR4, LGR5 or LGR6), LGR4-6 associate with phosphorylated LRP6 and frizzled receptors that are activated by extracellular Wnt receptors, triggering the canonical Wnt signaling pathway to increase expression of target genes. Also regulates the canonical Wnt/beta-catenin-dependent pathway and non-canonical Wnt signaling by acting as an inhibitor of ZNRF3, an important regulator of the Wnt signaling pathway. Acts as a ligand for frizzled FZD8 and LRP6. May negatively regulate the TGF-beta pathway. Acts as a key regulator of angiogenesis by controlling vascular stability and pruning: acts by activating the non-canonical Wnt signaling pathway in endothelial cells. Can also amplify Wnt signaling pathway independently of LGR4-6 receptors, possibly by acting as a direct antagonistic ligand to RNF43 and ZNRF3. The sequence is that of R-spondin-3 (RSPO3) from Bos taurus (Bovine).